The following is a 251-amino-acid chain: uncharacterized protein (251 aa).

It belongs to the FAM243 family.

This is an uncharacterized protein from Mus musculus (Mouse).